The sequence spans 75 residues: ATP synthase subunit c (75 aa).

2 consecutive transmembrane segments (helical) span residues 13–33 (LNVV…GILI) and 54–74 (MFLG…LAFI).

It belongs to the ATPase C chain family. In terms of assembly, F-type ATPases have 2 components, F(1) - the catalytic core - and F(0) - the membrane proton channel. F(1) has five subunits: alpha(3), beta(3), gamma(1), delta(1), epsilon(1). F(0) has three main subunits: a(1), b(2) and c(10-14). The alpha and beta chains form an alternating ring which encloses part of the gamma chain. F(1) is attached to F(0) by a central stalk formed by the gamma and epsilon chains, while a peripheral stalk is formed by the delta and b chains.

The protein resides in the cell membrane. Its function is as follows. F(1)F(0) ATP synthase produces ATP from ADP in the presence of a proton or sodium gradient. F-type ATPases consist of two structural domains, F(1) containing the extramembraneous catalytic core and F(0) containing the membrane proton channel, linked together by a central stalk and a peripheral stalk. During catalysis, ATP synthesis in the catalytic domain of F(1) is coupled via a rotary mechanism of the central stalk subunits to proton translocation. Key component of the F(0) channel; it plays a direct role in translocation across the membrane. A homomeric c-ring of between 10-14 subunits forms the central stalk rotor element with the F(1) delta and epsilon subunits. This chain is ATP synthase subunit c, found in Bifidobacterium adolescentis (strain ATCC 15703 / DSM 20083 / NCTC 11814 / E194a).